A 398-amino-acid polypeptide reads, in one-letter code: Acetate kinase 1 (398 aa).

N9 contacts Mg(2+). K16 is an ATP binding site. R89 lines the substrate pocket. The Proton donor/acceptor role is filled by D146. ATP is bound by residues 206–210 (HLGNG), 281–283 (DCR), and 329–333 (GIGEN). E384 is a binding site for Mg(2+).

It belongs to the acetokinase family. Homodimer. The cofactor is Mg(2+). Requires Mn(2+) as cofactor.

It is found in the cytoplasm. The enzyme catalyses acetate + ATP = acetyl phosphate + ADP. It functions in the pathway metabolic intermediate biosynthesis; acetyl-CoA biosynthesis; acetyl-CoA from acetate: step 1/2. In terms of biological role, catalyzes the formation of acetyl phosphate from acetate and ATP. Can also catalyze the reverse reaction. This chain is Acetate kinase 1, found in Photobacterium profundum (strain SS9).